Here is a 259-residue protein sequence, read N- to C-terminus: Flagellar L-ring protein (259 aa).

An N-terminal signal peptide occupies residues 1–15 (MKRISLIALVTIMSG). A lipid anchor (N-palmitoyl cysteine) is attached at cysteine 16. The S-diacylglycerol cysteine moiety is linked to residue cysteine 16.

This sequence belongs to the FlgH family. In terms of assembly, the basal body constitutes a major portion of the flagellar organelle and consists of four rings (L,P,S, and M) mounted on a central rod.

It is found in the cell outer membrane. The protein resides in the bacterial flagellum basal body. Assembles around the rod to form the L-ring and probably protects the motor/basal body from shearing forces during rotation. In Vibrio vulnificus (strain CMCP6), this protein is Flagellar L-ring protein.